Reading from the N-terminus, the 353-residue chain is Photosystem II D2 protein (353 aa).

An N-acetylthreonine modification is found at Thr2. Residue Thr2 is modified to Phosphothreonine. A helical transmembrane segment spans residues 41 to 61 (CAYFALGGWFTGTTFVTSWYT). Position 118 (His118) interacts with chlorophyll a. Residues 125-141 (GFMLRQFELARSVQLRP) traverse the membrane as a helical segment. Residues Gln130 and Asn143 each coordinate pheophytin a. A helical membrane pass occupies residues 153–166 (VFVSVFLIYPLGQS). His198 contributes to the chlorophyll a binding site. The chain crosses the membrane as a helical span at residues 208–228 (AALLCAIHGATVENTLFEDGD). Residues His215 and Phe262 each coordinate a plastoquinone. His215 contacts Fe cation. His269 contributes to the Fe cation binding site. The helical transmembrane segment at 279 to 295 (GLWMSALGVVGLALNLR) threads the bilayer.

This sequence belongs to the reaction center PufL/M/PsbA/D family. PSII is composed of 1 copy each of membrane proteins PsbA, PsbB, PsbC, PsbD, PsbE, PsbF, PsbH, PsbI, PsbJ, PsbK, PsbL, PsbM, PsbT, PsbX, PsbY, PsbZ, Psb30/Ycf12, at least 3 peripheral proteins of the oxygen-evolving complex and a large number of cofactors. It forms dimeric complexes. Requires The D1/D2 heterodimer binds P680, chlorophylls that are the primary electron donor of PSII, and subsequent electron acceptors. It shares a non-heme iron and each subunit binds pheophytin, quinone, additional chlorophylls, carotenoids and lipids. There is also a Cl(-1) ion associated with D1 and D2, which is required for oxygen evolution. The PSII complex binds additional chlorophylls, carotenoids and specific lipids. as cofactor.

It localises to the plastid. The protein localises to the chloroplast thylakoid membrane. The enzyme catalyses 2 a plastoquinone + 4 hnu + 2 H2O = 2 a plastoquinol + O2. In terms of biological role, photosystem II (PSII) is a light-driven water:plastoquinone oxidoreductase that uses light energy to abstract electrons from H(2)O, generating O(2) and a proton gradient subsequently used for ATP formation. It consists of a core antenna complex that captures photons, and an electron transfer chain that converts photonic excitation into a charge separation. The D1/D2 (PsbA/PsbD) reaction center heterodimer binds P680, the primary electron donor of PSII as well as several subsequent electron acceptors. D2 is needed for assembly of a stable PSII complex. The protein is Photosystem II D2 protein of Spinacia oleracea (Spinach).